The chain runs to 64 residues: uncharacterized protein (64 aa).

This is an uncharacterized protein from Escherichia coli O157:H7.